A 361-amino-acid chain; its full sequence is Caspase activity and apoptosis inhibitor 1 (361 aa).

Positions 1–14 (MTGKKSSREKRRKR) are enriched in basic residues. Disordered regions lie at residues 1 to 28 (MTGKKSSREKRRKRSSQEAAAALAAPDI) and 67 to 100 (GGSGGSCWGGSSVERSERRKRRSTDSSSVSGSLQ). Residues 19 to 28 (AAAALAAPDI) are compositionally biased toward low complexity. A Phosphoserine modification is found at serine 89. Phosphothreonine is present on threonine 90. Lysine 104 is covalently cross-linked (Glycyl lysine isopeptide (Lys-Gly) (interchain with G-Cter in SUMO2)). Residues serine 120 and serine 203 each carry the phosphoserine modification. Disordered regions lie at residues 198 to 218 (DNGMDSDMEEEADDGSKMGSD) and 230 to 331 (ASSV…DVQP). Acidic residues predominate over residues 199–210 (NGMDSDMEEEAD). Basic and acidic residues predominate over residues 234–251 (RENKQPEGLELKQGKGED). Residues 272 to 281 (EEAAAPEAPE) are compositionally biased toward low complexity. The stretch at 281–311 (ENTVQSEAGQIDDLEKDIEKSVNEILGLAES) forms a coiled coil. Serine 312 is subject to Phosphoserine.

Ubiquitous.

In terms of biological role, anti-apoptotic protein that modulates a caspase-10 dependent mitochondrial caspase-3/9 feedback amplification loop. This Homo sapiens (Human) protein is Caspase activity and apoptosis inhibitor 1 (CAAP1).